Reading from the N-terminus, the 302-residue chain is Aspartate carbamoyltransferase catalytic subunit (302 aa).

Carbamoyl phosphate-binding residues include R53 and T54. K82 is a binding site for L-aspartate. Residues R103, H131, and Q134 each coordinate carbamoyl phosphate. Positions 164 and 223 each coordinate L-aspartate. Carbamoyl phosphate-binding residues include L260 and P261.

The protein belongs to the aspartate/ornithine carbamoyltransferase superfamily. ATCase family. In terms of assembly, heterooligomer of catalytic and regulatory chains.

It catalyses the reaction carbamoyl phosphate + L-aspartate = N-carbamoyl-L-aspartate + phosphate + H(+). It functions in the pathway pyrimidine metabolism; UMP biosynthesis via de novo pathway; (S)-dihydroorotate from bicarbonate: step 2/3. Its function is as follows. Catalyzes the condensation of carbamoyl phosphate and aspartate to form carbamoyl aspartate and inorganic phosphate, the committed step in the de novo pyrimidine nucleotide biosynthesis pathway. This is Aspartate carbamoyltransferase catalytic subunit from Methanococcus maripaludis (strain C7 / ATCC BAA-1331).